A 346-amino-acid polypeptide reads, in one-letter code: Biotin synthase (346 aa).

The 219-residue stretch at 38–256 (QQVQVSTLLS…IAVARIMMPT (219 aa)) folds into the Radical SAM core domain. Residues Cys-53, Cys-57, and Cys-60 each contribute to the [4Fe-4S] cluster site. [2Fe-2S] cluster-binding residues include Cys-97, Cys-128, Cys-188, and Arg-260.

Belongs to the radical SAM superfamily. Biotin synthase family. Homodimer. [4Fe-4S] cluster is required as a cofactor. It depends on [2Fe-2S] cluster as a cofactor.

It catalyses the reaction (4R,5S)-dethiobiotin + (sulfur carrier)-SH + 2 reduced [2Fe-2S]-[ferredoxin] + 2 S-adenosyl-L-methionine = (sulfur carrier)-H + biotin + 2 5'-deoxyadenosine + 2 L-methionine + 2 oxidized [2Fe-2S]-[ferredoxin]. Its pathway is cofactor biosynthesis; biotin biosynthesis; biotin from 7,8-diaminononanoate: step 2/2. In terms of biological role, catalyzes the conversion of dethiobiotin (DTB) to biotin by the insertion of a sulfur atom into dethiobiotin via a radical-based mechanism. The protein is Biotin synthase of Salmonella newport (strain SL254).